Reading from the N-terminus, the 668-residue chain is DNA ligase (668 aa).

NAD(+)-binding positions include 31-35 (DAEYD), 80-81 (SL), and Glu-112. The N6-AMP-lysine intermediate role is filled by Lys-114. NAD(+) is bound by residues Arg-135, Glu-172, Lys-289, and Lys-313. 4 residues coordinate Zn(2+): Cys-407, Cys-410, Cys-425, and Cys-431. Residues 591-668 (SVPQPLAGKV…NEEQLIELLN (78 aa)) enclose the BRCT domain.

The protein belongs to the NAD-dependent DNA ligase family. LigA subfamily. Requires Mg(2+) as cofactor. Mn(2+) serves as cofactor.

It catalyses the reaction NAD(+) + (deoxyribonucleotide)n-3'-hydroxyl + 5'-phospho-(deoxyribonucleotide)m = (deoxyribonucleotide)n+m + AMP + beta-nicotinamide D-nucleotide.. In terms of biological role, DNA ligase that catalyzes the formation of phosphodiester linkages between 5'-phosphoryl and 3'-hydroxyl groups in double-stranded DNA using NAD as a coenzyme and as the energy source for the reaction. It is essential for DNA replication and repair of damaged DNA. This is DNA ligase from Aliivibrio fischeri (strain MJ11) (Vibrio fischeri).